The primary structure comprises 1089 residues: GPI ethanolamine phosphate transferase 3, catalytic subunit (1089 aa).

Residues 4–24 traverse the membrane as a helical segment; it reads ASVLLFLAWVCFLFYAGIALF. The N-linked (GlcNAc...) asparagine glycan is linked to Asn268. 13 consecutive transmembrane segments (helical) span residues 457–477, 482–502, 510–530, 541–561, 575–595, 668–688, 701–721, 747–767, 830–850, 857–877, 944–964, 1014–1034, and 1048–1068; these read LLAA…SPGF, LLLT…GLLG, LVLL…WKAW, TLFP…AVFF, FLLG…GQLL, LWYG…RLWL, MLFV…YWAL, VAGL…TVLV, SVYS…LLLL, LVFL…AAGI, FASH…PFLC, LKYL…ASIL, and FIFE…GIAL.

This sequence belongs to the PIGG/PIGN/PIGO family. PIGO subfamily. As to quaternary structure, part of the ethanolamine phosphate transferase 3 complex composed by PIGO and PIGF. PIGF is required to stabilize PIGO.

The protein localises to the endoplasmic reticulum membrane. Its pathway is glycolipid biosynthesis; glycosylphosphatidylinositol-anchor biosynthesis. Catalytic subunit of the ethanolamine phosphate transferase 3 complex that transfers an ethanolamine phosphate (EtNP) from a phosphatidylethanolamine (PE) to the 6-OH position of the third alpha-1,2-linked mannose of an alpha-D-Man-(1-&gt;2)-alpha-D-Man-(1-&gt;6)-2-PEtn-alpha-D-Man-(1-&gt;4)-alpha-D-GlcN-(1-&gt;6)-(1-radyl,2-acyl-sn-glycero-3-phospho)-2-acyl-inositol (also termed H6) intermediate to generate a 6-PEtn-alpha-D-Man-(1-&gt;2)-alpha-D-Man-(1-&gt;6)-2-PEtn-alpha-D-Man-(1-&gt;4)-alpha-D-GlcN-(1-&gt;6)-(1-radyl,2-acyl-sn-glycero-3-phospho)-2-acyl-inositol (also termed H7) and participates in the tenth step of the glycosylphosphatidylinositol-anchor biosynthesis. The polypeptide is GPI ethanolamine phosphate transferase 3, catalytic subunit (Homo sapiens (Human)).